A 227-amino-acid polypeptide reads, in one-letter code: Monoamine regulon transcriptional regulator (227 aa).

In terms of domain architecture, HTH luxR-type spans 155 to 220 (EDDLPAILTA…ELVSRTWMPA (66 aa)). Residues 179–198 (NKLIARQLDISLSTVKTHLR) constitute a DNA-binding region (H-T-H motif).

Its function is as follows. Positive regulatory protein for the induction of arylsulfatase synthesis (maoA), tyramine oxidase (tynA), maoC, maoE/F operon, and atsB/A operon which are all regulated by monoamines, and included under the common term of monoamine regulon. This Klebsiella aerogenes (Enterobacter aerogenes) protein is Monoamine regulon transcriptional regulator (moaR).